Reading from the N-terminus, the 162-residue chain is Small ribosomal subunit protein uS13 (162 aa).

A disordered region spans residues 142 to 162; the sequence is RGQRTKSTGRRGSTVGVSRKK.

It belongs to the universal ribosomal protein uS13 family. Part of the 30S ribosomal subunit. Forms a loose heterodimer with protein S19. Forms two bridges to the 50S subunit in the 70S ribosome.

Functionally, located at the top of the head of the 30S subunit, it contacts several helices of the 16S rRNA. In the 70S ribosome it contacts the 23S rRNA (bridge B1a) and protein L5 of the 50S subunit (bridge B1b), connecting the 2 subunits; these bridges are implicated in subunit movement. The sequence is that of Small ribosomal subunit protein uS13 from Methanosarcina acetivorans (strain ATCC 35395 / DSM 2834 / JCM 12185 / C2A).